The following is a 347-amino-acid chain: Phosphoribosylformylglycinamidine cyclo-ligase (347 aa).

This sequence belongs to the AIR synthase family.

The protein resides in the cytoplasm. The enzyme catalyses 2-formamido-N(1)-(5-O-phospho-beta-D-ribosyl)acetamidine + ATP = 5-amino-1-(5-phospho-beta-D-ribosyl)imidazole + ADP + phosphate + H(+). The protein operates within purine metabolism; IMP biosynthesis via de novo pathway; 5-amino-1-(5-phospho-D-ribosyl)imidazole from N(2)-formyl-N(1)-(5-phospho-D-ribosyl)glycinamide: step 2/2. The polypeptide is Phosphoribosylformylglycinamidine cyclo-ligase (Desulfatibacillum aliphaticivorans).